Reading from the N-terminus, the 331-residue chain is Aspartate carbamoyltransferase catalytic subunit (331 aa).

Carbamoyl phosphate contacts are provided by arginine 55 and threonine 56. Lysine 84 lines the L-aspartate pocket. Arginine 105, histidine 133, and glutamine 136 together coordinate carbamoyl phosphate. The L-aspartate site is built by arginine 166 and arginine 229. Residues leucine 268 and proline 269 each contribute to the carbamoyl phosphate site.

Belongs to the aspartate/ornithine carbamoyltransferase superfamily. ATCase family. Heterododecamer (2C3:3R2) of six catalytic PyrB chains organized as two trimers (C3), and six regulatory PyrI chains organized as three dimers (R2).

The catalysed reaction is carbamoyl phosphate + L-aspartate = N-carbamoyl-L-aspartate + phosphate + H(+). Its pathway is pyrimidine metabolism; UMP biosynthesis via de novo pathway; (S)-dihydroorotate from bicarbonate: step 2/3. In terms of biological role, catalyzes the condensation of carbamoyl phosphate and aspartate to form carbamoyl aspartate and inorganic phosphate, the committed step in the de novo pyrimidine nucleotide biosynthesis pathway. This Alkaliphilus oremlandii (strain OhILAs) (Clostridium oremlandii (strain OhILAs)) protein is Aspartate carbamoyltransferase catalytic subunit.